Here is a 146-residue protein sequence, read N- to C-terminus: Hemoglobin subunit beta (146 aa).

Position 1 is an N-acetylvaline (valine 1). Positions 2–146 constitute a Globin domain; it reads DLTAEEKAAV…VANALAHKYH (145 aa). Serine 44 is subject to Phosphoserine. N6-acetyllysine is present on lysine 59. Histidine 63 contributes to the heme b binding site. At lysine 82 the chain carries N6-acetyllysine. Histidine 92 provides a ligand contact to heme b. Cysteine 93 is subject to S-nitrosocysteine. Lysine 144 is subject to N6-acetyllysine.

It belongs to the globin family. Heterotetramer of two alpha chains and two beta chains. In terms of tissue distribution, red blood cells.

Functionally, involved in oxygen transport from the lung to the various peripheral tissues. The polypeptide is Hemoglobin subunit beta (HBB) (Rhinoceros unicornis (Greater Indian rhinoceros)).